The primary structure comprises 504 residues: Histidine ammonia-lyase (504 aa).

A cross-link (5-imidazolinone (Ala-Gly)) is located at residues 142–144; that stretch reads ASG. Residue Ser-143 is modified to 2,3-didehydroalanine (Ser).

Belongs to the PAL/histidase family. Post-translationally, contains an active site 4-methylidene-imidazol-5-one (MIO), which is formed autocatalytically by cyclization and dehydration of residues Ala-Ser-Gly.

The protein localises to the cytoplasm. The enzyme catalyses L-histidine = trans-urocanate + NH4(+). It participates in amino-acid degradation; L-histidine degradation into L-glutamate; N-formimidoyl-L-glutamate from L-histidine: step 1/3. The protein is Histidine ammonia-lyase of Staphylococcus aureus (strain USA300).